The chain runs to 157 residues: Lipoprotein signal peptidase (157 aa).

The next 3 helical transmembrane spans lie at 10-30 (LVFMGVFFLIFGVDQAIKYAI), 58-78 (FLEGGLKYLQILLILGLFIFL), and 84-104 (LFKNHAIEFGMVFGAGVSNVL). Catalysis depends on residues aspartate 114 and aspartate 131. Residues 122-142 (FDFAIFNFADVMIDVGVGVLL) traverse the membrane as a helical segment.

The protein belongs to the peptidase A8 family.

The protein localises to the cell inner membrane. It catalyses the reaction Release of signal peptides from bacterial membrane prolipoproteins. Hydrolyzes -Xaa-Yaa-Zaa-|-(S,diacylglyceryl)Cys-, in which Xaa is hydrophobic (preferably Leu), and Yaa (Ala or Ser) and Zaa (Gly or Ala) have small, neutral side chains.. Its pathway is protein modification; lipoprotein biosynthesis (signal peptide cleavage). In terms of biological role, this protein specifically catalyzes the removal of signal peptides from prolipoproteins. This Helicobacter pylori (strain ATCC 700392 / 26695) (Campylobacter pylori) protein is Lipoprotein signal peptidase.